The sequence spans 73 residues: Cytochrome b559 subunit alpha (73 aa).

The chain crosses the membrane as a helical span at residues 21 to 35 (IIHSITVPSLFIAGW). H23 contacts heme.

It belongs to the PsbE/PsbF family. As to quaternary structure, heterodimer of an alpha subunit and a beta subunit. PSII is composed of 1 copy each of membrane proteins PsbA, PsbB, PsbC, PsbD, PsbE, PsbF, PsbH, PsbI, PsbJ, PsbK, PsbL, PsbM, PsbT, PsbY, PsbZ, Psb30/Ycf12, at least 3 peripheral proteins of the oxygen-evolving complex and a large number of cofactors. It forms dimeric complexes. Requires heme b as cofactor.

It localises to the plastid. The protein localises to the chloroplast thylakoid membrane. In terms of biological role, this b-type cytochrome is tightly associated with the reaction center of photosystem II (PSII). PSII is a light-driven water:plastoquinone oxidoreductase that uses light energy to abstract electrons from H(2)O, generating O(2) and a proton gradient subsequently used for ATP formation. It consists of a core antenna complex that captures photons, and an electron transfer chain that converts photonic excitation into a charge separation. The polypeptide is Cytochrome b559 subunit alpha (Bigelowiella natans (Pedinomonas minutissima)).